The primary structure comprises 596 residues: Fructan 1-exohydrolase w3 (596 aa).

The first 20 residues, 1–20, serve as a signal peptide directing secretion; the sequence is MAQAWAFLLPVLVLGSYVTS. The active site involves Asp-75. N-linked (GlcNAc...) asparagine glycans are attached at residues Asn-168, Asn-236, and Asn-248. Cys-446 and Cys-492 are disulfide-bonded.

The protein belongs to the glycosyl hydrolase 32 family. Expressed in the stem, particularly the penultimate internode. Little expression is detected in roots and in the peduncle part of the stem.

It catalyses the reaction Hydrolysis of terminal, non-reducing (2-&gt;1)-linked beta-D-fructofuranose residues in fructans.. Inhibited by sucrose. Hydrolyzes inulin-type beta-(2,1)-fructans and beta-(2,1)-linkages in branched fructans. Has low activity against beta-(2,6)-linked fructans. May play a role as a beta-(2,1)-trimmer during graminan biosynthesis. The sequence is that of Fructan 1-exohydrolase w3 from Triticum aestivum (Wheat).